The primary structure comprises 202 residues: MCTPNDLAVLHAIFNPNVPFGNFDEQNVGDTEANADLDGRFSSAILQQAQDLERDGVKAAESEDMATAILKFSEAIALLPERASAYNNRAQALRLQGDVKGALEDLNQAVELSGIAGVAGRQALVQRGLILRLQGKDDEARKDFQRAAQLGSDFAKQQLILLNPYAALCNTMLRDMMQKLREPNGHKIQVGASTSLEDDREA.

3 TPR repeats span residues 49 to 82 (AQDL…LPER), 83 to 116 (ASAY…SGIA), and 121 to 154 (RQAL…GSDF).

The protein belongs to the TTC36 family.

The sequence is that of Tetratricopeptide repeat protein 36 (ttc36) from Xenopus tropicalis (Western clawed frog).